The primary structure comprises 151 residues: Probable cGMP 3',5'-cyclic phosphodiesterase subunit delta (151 aa).

This sequence belongs to the PDE6D/unc-119 family. In terms of assembly, interacts with Pde6.

It is found in the nucleus. The protein resides in the cytoplasm. This chain is Probable cGMP 3',5'-cyclic phosphodiesterase subunit delta, found in Culex quinquefasciatus (Southern house mosquito).